A 397-amino-acid polypeptide reads, in one-letter code: MRRITVLGATGSIGQNTLNVVSRHPDDFQVFALTAHSQISAMAELCVKHNPQYAVMGSYNAAAELKALLGQQTSTQVMYGDQALAEVSSDAEVDVVMAAIVGAAGLSPTLAAIDAGKDVLLANKEALVMSGQLFIDHAQRSGARIIPVDSEHNAIFQCLPQAAQQQVGTMALAEHGIQYLLLTGSGGPFRDIPLEELPQQTPGAACNHPNWSMGRKISVDSATMLNKGLEYIEARWLFNCSRDQLKVVIHPQSVIHSMVQYTDGSVLAQMGEPDMRTPIAHSLGYPERLESGVAGLDFTQIAELTFKQPEAQRYPCLQLAIEACWEGQWATTALNAANEVAVAAFLQEQVGFTDIAKVCDSVLQSIQADEADSLETLLAIDKQARLAANKWLQEYAQ.

Threonine 10, glycine 11, serine 12, isoleucine 13, glutamine 38, and asparagine 123 together coordinate NADPH. Residue lysine 124 participates in 1-deoxy-D-xylulose 5-phosphate binding. Position 125 (glutamate 125) interacts with NADPH. Aspartate 149 lines the Mn(2+) pocket. 1-deoxy-D-xylulose 5-phosphate-binding residues include serine 150, glutamate 151, serine 185, and histidine 208. Mn(2+) is bound at residue glutamate 151. Glycine 214 lines the NADPH pocket. Residues serine 221, asparagine 226, lysine 227, and glutamate 230 each coordinate 1-deoxy-D-xylulose 5-phosphate. Glutamate 230 contacts Mn(2+).

The protein belongs to the DXR family. Mg(2+) serves as cofactor. The cofactor is Mn(2+).

It catalyses the reaction 2-C-methyl-D-erythritol 4-phosphate + NADP(+) = 1-deoxy-D-xylulose 5-phosphate + NADPH + H(+). Its pathway is isoprenoid biosynthesis; isopentenyl diphosphate biosynthesis via DXP pathway; isopentenyl diphosphate from 1-deoxy-D-xylulose 5-phosphate: step 1/6. Its function is as follows. Catalyzes the NADPH-dependent rearrangement and reduction of 1-deoxy-D-xylulose-5-phosphate (DXP) to 2-C-methyl-D-erythritol 4-phosphate (MEP). This is 1-deoxy-D-xylulose 5-phosphate reductoisomerase from Idiomarina loihiensis (strain ATCC BAA-735 / DSM 15497 / L2-TR).